The sequence spans 272 residues: Type III pantothenate kinase (272 aa).

6–13 (DVRNTHTV) is an ATP binding site. 109 to 112 (GADR) lines the substrate pocket. D111 acts as the Proton acceptor in catalysis. D131 provides a ligand contact to K(+). S134 provides a ligand contact to ATP. Position 186 (T186) interacts with substrate.

It belongs to the type III pantothenate kinase family. In terms of assembly, homodimer. NH4(+) serves as cofactor. It depends on K(+) as a cofactor.

It is found in the cytoplasm. The catalysed reaction is (R)-pantothenate + ATP = (R)-4'-phosphopantothenate + ADP + H(+). It functions in the pathway cofactor biosynthesis; coenzyme A biosynthesis; CoA from (R)-pantothenate: step 1/5. Catalyzes the phosphorylation of pantothenate (Pan), the first step in CoA biosynthesis. This is Type III pantothenate kinase from Mycobacterium bovis (strain BCG / Pasteur 1173P2).